An 89-amino-acid chain; its full sequence is Small ribosomal subunit protein uS15c (89 aa).

The protein belongs to the universal ribosomal protein uS15 family. Part of the 30S ribosomal subunit.

The protein localises to the plastid. The protein resides in the organellar chromatophore. The chain is Small ribosomal subunit protein uS15c (rps15) from Paulinella chromatophora.